The following is a 489-amino-acid chain: Cysteine--tRNA ligase (489 aa).

C27 contributes to the Zn(2+) binding site. A 'HIGH' region motif is present at residues 29 to 39; sequence VTVYDLCHLGH. Zn(2+) contacts are provided by C211, H236, and E240. The short motif at 268 to 272 is the 'KMSKS' region element; sequence KMSKS. Position 271 (K271) interacts with ATP.

This sequence belongs to the class-I aminoacyl-tRNA synthetase family. As to quaternary structure, monomer. It depends on Zn(2+) as a cofactor.

The protein resides in the cytoplasm. It carries out the reaction tRNA(Cys) + L-cysteine + ATP = L-cysteinyl-tRNA(Cys) + AMP + diphosphate. The polypeptide is Cysteine--tRNA ligase (Prochlorococcus marinus (strain AS9601)).